A 194-amino-acid polypeptide reads, in one-letter code: Adapter protein MecA 2 (194 aa).

This sequence belongs to the MecA family. Homodimer.

Enables the recognition and targeting of unfolded and aggregated proteins to the ClpC protease or to other proteins involved in proteolysis. Also involved in Spx degradation by ClpC. Acts negatively in the development of competence by binding ComK and recruiting it to the ClpCP protease. When overexpressed, inhibits sporulation. This is Adapter protein MecA 2 (mecB) from Bacillus subtilis (strain 168).